Here is a 293-residue protein sequence, read N- to C-terminus: Exosome complex component RRP4 (293 aa).

Positions 1–20 (MALEMRLPKARKPLSESLGR) are disordered. The 81-residue stretch at 79–159 (EVGDIVVGRI…SDGAVSLHTR (81 aa)) folds into the S1 motif domain. Position 124 is a phosphoserine (S124).

This sequence belongs to the RRP4 family. Component of the RNA exosome core complex (Exo-9), composed of EXOSC1, EXOSC2, EXOSC3, EXOSC4, EXOSC5, EXOSC6, EXOSC7, EXOSC8 and EXOSC9; within the complex interacts with EXOSC4 and EXOSC7. The catalytically inactive RNA exosome core complex (Exo-9) associates with the catalytic subunit EXOSC10/RRP6. Exo-9 may associate with DIS3 to form the nucleolar exosome complex, or DIS3L to form the cytoplasmic exosome complex. Exo-9 is formed by a hexameric base ring consisting of the heterodimers EXOSC4-EXOSC9, EXOSC5-EXOSC8 and EXOSC6-EXOSC7, and a cap ring consisting of EXOSC1, EXOSC2 and EXOSC3. The RNA exosome complex associates with cofactors C1D/RRP47, MPHOSPH6/MPP6 and MTREX/MTR4. Interacts with GTPBP1. Interacts with ZFP36L1 (via N-terminus).

It localises to the cytoplasm. The protein resides in the nucleus. It is found in the nucleolus. Functionally, non-catalytic component of the RNA exosome complex which has 3'-&gt;5' exoribonuclease activity and participates in a multitude of cellular RNA processing and degradation events. In the nucleus, the RNA exosome complex is involved in proper maturation of stable RNA species such as rRNA, snRNA and snoRNA, in the elimination of RNA processing by-products and non-coding 'pervasive' transcripts, such as antisense RNA species and promoter-upstream transcripts (PROMPTs), and of mRNAs with processing defects, thereby limiting or excluding their export to the cytoplasm. The RNA exosome may be involved in Ig class switch recombination (CSR) and/or Ig variable region somatic hypermutation (SHM) by targeting AICDA deamination activity to transcribed dsDNA substrates. In the cytoplasm, the RNA exosome complex is involved in general mRNA turnover and specifically degrades inherently unstable mRNAs containing AU-rich elements (AREs) within their 3' untranslated regions, and in RNA surveillance pathways, preventing translation of aberrant mRNAs. It seems to be involved in degradation of histone mRNA. The catalytic inactive RNA exosome core complex of 9 subunits (Exo-9) is proposed to play a pivotal role in the binding and presentation of RNA for ribonucleolysis, and to serve as a scaffold for the association with catalytic subunits and accessory proteins or complexes. EXOSC2 as peripheral part of the Exo-9 complex stabilizes the hexameric ring of RNase PH-domain subunits through contacts with EXOSC4 and EXOSC7. This chain is Exosome complex component RRP4 (Exosc2), found in Mus musculus (Mouse).